A 209-amino-acid polypeptide reads, in one-letter code: Uracil phosphoribosyltransferase (209 aa).

5-phospho-alpha-D-ribose 1-diphosphate contacts are provided by residues Arg79, Arg104, and 131–139 (DPMLATGGS). Uracil-binding positions include Ile194 and 199–201 (GDA). Residue Asp200 participates in 5-phospho-alpha-D-ribose 1-diphosphate binding.

Belongs to the UPRTase family. The cofactor is Mg(2+).

The catalysed reaction is UMP + diphosphate = 5-phospho-alpha-D-ribose 1-diphosphate + uracil. It functions in the pathway pyrimidine metabolism; UMP biosynthesis via salvage pathway; UMP from uracil: step 1/1. With respect to regulation, allosterically activated by GTP. Functionally, catalyzes the conversion of uracil and 5-phospho-alpha-D-ribose 1-diphosphate (PRPP) to UMP and diphosphate. The polypeptide is Uracil phosphoribosyltransferase (Lysinibacillus sphaericus (strain C3-41)).